The following is a 66-amino-acid chain: Phylloseptin-H9 (66 aa).

The first 22 residues, 1–22, serve as a signal peptide directing secretion; the sequence is MAFLKKSLFLVLFLGLVSLSIC. A propeptide spanning residues 23-44 is cleaved from the precursor; it reads EEEKRETEEEENDQEEDDKSEE. The disordered stretch occupies residues 24–44; the sequence is EEKRETEEEENDQEEDDKSEE. Positions 30–41 are enriched in acidic residues; sequence EEEENDQEEDDK. Residue L65 is modified to Leucine amide.

Expressed by the skin glands.

The protein localises to the secreted. In terms of biological role, has antimicrobial activity. The sequence is that of Phylloseptin-H9 from Pithecopus hypochondrialis (Orange-legged leaf frog).